The following is a 230-amino-acid chain: Leucyl/phenylalanyl-tRNA--protein transferase (230 aa).

Belongs to the L/F-transferase family.

It localises to the cytoplasm. The catalysed reaction is N-terminal L-lysyl-[protein] + L-leucyl-tRNA(Leu) = N-terminal L-leucyl-L-lysyl-[protein] + tRNA(Leu) + H(+). It carries out the reaction N-terminal L-arginyl-[protein] + L-leucyl-tRNA(Leu) = N-terminal L-leucyl-L-arginyl-[protein] + tRNA(Leu) + H(+). The enzyme catalyses L-phenylalanyl-tRNA(Phe) + an N-terminal L-alpha-aminoacyl-[protein] = an N-terminal L-phenylalanyl-L-alpha-aminoacyl-[protein] + tRNA(Phe). Functionally, functions in the N-end rule pathway of protein degradation where it conjugates Leu, Phe and, less efficiently, Met from aminoacyl-tRNAs to the N-termini of proteins containing an N-terminal arginine or lysine. The sequence is that of Leucyl/phenylalanyl-tRNA--protein transferase from Syntrophotalea carbinolica (strain DSM 2380 / NBRC 103641 / GraBd1) (Pelobacter carbinolicus).